The primary structure comprises 413 residues: O-methyltransferase kntB (413 aa).

S-adenosyl-L-methionine contacts are provided by residues 255-256 (GG), D280, 302-303 (NF), and R319. H322 (proton acceptor) is an active-site residue.

It belongs to the class I-like SAM-binding methyltransferase superfamily. Cation-independent O-methyltransferase family. S-adenosyl-L-methionine serves as cofactor.

The protein operates within secondary metabolite biosynthesis. Its function is as follows. Non-reducing polyketide synthase; part of the gene cluster that mediates the biosynthesis of the bicoumarin kotanin. The non-reducing polyketide synthase ktnS first catalyzes the formation of the pentaketidic 4,7-dihydroxy-5-methylcoumarin from acetyl coenzyme A and 4 malonyl coenzyme A molecules. Further O-methylation by ktnB leads to the formation of 7-demethylsiderin. Then, an oxidative phenol coupling catalyzed by the cytochrome P450 monooxygenase ktnC forms the 8,8'-dimer P-orlandin via dimerization the monomeric precursor, 7-demethylsiderin. P-orlandin is subsequently O-methylated in a stepwise fashion to demethylkotanin and kotanin. In Aspergillus niger (strain ATCC MYA-4892 / CBS 513.88 / FGSC A1513), this protein is O-methyltransferase kntB.